The sequence spans 346 residues: Phosphoribosylformylglycinamidine cyclo-ligase (346 aa).

This sequence belongs to the AIR synthase family.

Its subcellular location is the cytoplasm. It catalyses the reaction 2-formamido-N(1)-(5-O-phospho-beta-D-ribosyl)acetamidine + ATP = 5-amino-1-(5-phospho-beta-D-ribosyl)imidazole + ADP + phosphate + H(+). Its pathway is purine metabolism; IMP biosynthesis via de novo pathway; 5-amino-1-(5-phospho-D-ribosyl)imidazole from N(2)-formyl-N(1)-(5-phospho-D-ribosyl)glycinamide: step 2/2. The protein is Phosphoribosylformylglycinamidine cyclo-ligase of Bacillus licheniformis (strain ATCC 14580 / DSM 13 / JCM 2505 / CCUG 7422 / NBRC 12200 / NCIMB 9375 / NCTC 10341 / NRRL NRS-1264 / Gibson 46).